A 306-amino-acid chain; its full sequence is D-alanine--D-alanine ligase B (306 aa).

One can recognise an ATP-grasp domain in the interval 101–303 (KLLWQGAGLP…FSQLVVRILE (203 aa)). Residue 134–189 (ISALGLPLIVKPSREGSSVGMTKVVEENALQGALSLAFQHDDEILIEKWLCGPEFT) coordinates ATP. Residues Asp-257, Glu-270, and Asn-272 each coordinate Mg(2+).

Belongs to the D-alanine--D-alanine ligase family. Monomer. Mg(2+) is required as a cofactor. Requires Mn(2+) as cofactor.

The protein resides in the cytoplasm. The catalysed reaction is 2 D-alanine + ATP = D-alanyl-D-alanine + ADP + phosphate + H(+). It participates in cell wall biogenesis; peptidoglycan biosynthesis. Its function is as follows. Cell wall formation. The sequence is that of D-alanine--D-alanine ligase B (ddlB) from Salmonella typhimurium (strain LT2 / SGSC1412 / ATCC 700720).